The chain runs to 363 residues: Glutamate 5-kinase (363 aa).

Lys6 is a binding site for ATP. Substrate contacts are provided by Ser46, Asp133, and Asn145. Residues 165–166 and 207–213 contribute to the ATP site; these read TD and TGGMHTK. Residues 271-349 enclose the PUA domain; the sequence is TGRLLLDEGA…RDIEAVLGFT (79 aa).

The protein belongs to the glutamate 5-kinase family.

The protein resides in the cytoplasm. It carries out the reaction L-glutamate + ATP = L-glutamyl 5-phosphate + ADP. It functions in the pathway amino-acid biosynthesis; L-proline biosynthesis; L-glutamate 5-semialdehyde from L-glutamate: step 1/2. In terms of biological role, catalyzes the transfer of a phosphate group to glutamate to form L-glutamate 5-phosphate. This Deinococcus geothermalis (strain DSM 11300 / CIP 105573 / AG-3a) protein is Glutamate 5-kinase.